Here is a 445-residue protein sequence, read N- to C-terminus: KICSTOR subunit 2 (445 aa).

It belongs to the KICS2 family. As to quaternary structure, part of the KICSTOR complex composed of KPTN, ITFG2, KICS2 and SZT2. SZT2 probably serves as a link between the other three proteins in the KICSTOR complex and may mediate the direct interaction with the GATOR complex via GATOR1. The KICSTOR complex interacts directly with the GATOR1 complex and most probably indirectly with the GATOR2 complex in an amino acid-independent manner.

It is found in the lysosome membrane. Its function is as follows. As part of the KICSTOR complex functions in the amino acid-sensing branch of the TORC1 signaling pathway. Recruits, in an amino acid-independent manner, the GATOR1 complex to the lysosomal membranes and allows its interaction with GATOR2 and the RAG GTPases. Functions upstream of the RAG GTPases and is required to negatively regulate mTORC1 signaling in absence of amino acids. In absence of the KICSTOR complex mTORC1 is constitutively localized to the lysosome and activated. The KICSTOR complex is also probably involved in the regulation of mTORC1 by glucose. The protein is KICSTOR subunit 2 of Homo sapiens (Human).